We begin with the raw amino-acid sequence, 347 residues long: Protein RecA (347 aa).

Position 68–75 (68–75 (GPESSGKT)) interacts with ATP.

This sequence belongs to the RecA family.

It is found in the cytoplasm. Functionally, can catalyze the hydrolysis of ATP in the presence of single-stranded DNA, the ATP-dependent uptake of single-stranded DNA by duplex DNA, and the ATP-dependent hybridization of homologous single-stranded DNAs. It interacts with LexA causing its activation and leading to its autocatalytic cleavage. The chain is Protein RecA from Nocardia farcinica (strain IFM 10152).